A 209-amino-acid polypeptide reads, in one-letter code: Small ribosomal subunit protein uS4 (209 aa).

The tract at residues 22–45 (RGRNPLLRKPNPPGQHGMQRKKKS) is disordered. Residues 93 to 154 (CRLDNIVYRL…KSRRLAIVTE (62 aa)) form the S4 RNA-binding domain.

Belongs to the universal ribosomal protein uS4 family. In terms of assembly, part of the 30S ribosomal subunit. Contacts protein S5. The interaction surface between S4 and S5 is involved in control of translational fidelity.

Its function is as follows. One of the primary rRNA binding proteins, it binds directly to 16S rRNA where it nucleates assembly of the body of the 30S subunit. Functionally, with S5 and S12 plays an important role in translational accuracy. In Chlamydia muridarum (strain MoPn / Nigg), this protein is Small ribosomal subunit protein uS4.